Here is a 177-residue protein sequence, read N- to C-terminus: 3-hydroxydecanoyl-[acyl-carrier-protein] dehydratase (177 aa).

His-76 is an active-site residue.

This sequence belongs to the thioester dehydratase family. FabA subfamily. Homodimer.

The protein resides in the cytoplasm. It carries out the reaction a (3R)-hydroxyacyl-[ACP] = a (2E)-enoyl-[ACP] + H2O. It catalyses the reaction (3R)-hydroxydecanoyl-[ACP] = (2E)-decenoyl-[ACP] + H2O. The enzyme catalyses (2E)-decenoyl-[ACP] = (3Z)-decenoyl-[ACP]. It participates in lipid metabolism; fatty acid biosynthesis. In terms of biological role, necessary for the introduction of cis unsaturation into fatty acids. Catalyzes the dehydration of (3R)-3-hydroxydecanoyl-ACP to E-(2)-decenoyl-ACP and then its isomerization to Z-(3)-decenoyl-ACP. Can catalyze the dehydratase reaction for beta-hydroxyacyl-ACPs with saturated chain lengths up to 16:0, being most active on intermediate chain length. The chain is 3-hydroxydecanoyl-[acyl-carrier-protein] dehydratase from Mannheimia succiniciproducens (strain KCTC 0769BP / MBEL55E).